Consider the following 827-residue polypeptide: Cadherin-17 (827 aa).

The first 21 residues, 1–21, serve as a signal peptide directing secretion; the sequence is MVSAQLHFLCLLTLYLTGAYG. The Extracellular segment spans residues 22–786; the sequence is QEGKFSGPLK…NQVGIPTVGM (765 aa). 7 Cadherin domains span residues 29-127, 128-243, 244-339, 340-448, 449-565, 566-666, and 667-776; these read PLKP…TFLQ, TKYE…APEP, VEIR…PPTC, LSQV…IPIF, ERSD…VPVF, PQQI…PPRL, and AKDY…RPAG. N-linked (GlcNAc...) asparagine glycans are attached at residues asparagine 148, asparagine 183, asparagine 249, asparagine 418, asparagine 545, asparagine 573, and asparagine 721. A helical transmembrane segment spans residues 787–807; sequence AVGILLTTFLVIGIILAVVFI. At 808-827 the chain is on the cytoplasmic side; the sequence is RMRKDKVEDPQSPENKPLRS.

In terms of tissue distribution, liver and intestine.

It localises to the cell membrane. Functionally, cadherins are calcium-dependent cell adhesion proteins. They preferentially interact with themselves in a homophilic manner in connecting cells; cadherins may thus contribute to the sorting of heterogeneous cell types. LI-cadherin may have a role in the morphological organization of liver and intestine. The sequence is that of Cadherin-17 (Cdh17) from Rattus norvegicus (Rat).